A 282-amino-acid polypeptide reads, in one-letter code: DegV domain-containing protein SPy_0865/M5005_Spy0672 (282 aa).

Residues leucine 3–proline 280 form the DegV domain. Threonine 61 and serine 94 together coordinate hexadecanoate.

May bind long-chain fatty acids, such as palmitate, and may play a role in lipid transport or fatty acid metabolism. The sequence is that of DegV domain-containing protein SPy_0865/M5005_Spy0672 from Streptococcus pyogenes serotype M1.